A 294-amino-acid chain; its full sequence is Acetaldehyde dehydrogenase (294 aa).

Residue 11 to 14 (SGNI) coordinates NAD(+). Catalysis depends on cysteine 126, which acts as the Acyl-thioester intermediate. NAD(+) is bound by residues 157–165 (SAGPGTRAN) and asparagine 269.

The protein belongs to the acetaldehyde dehydrogenase family.

The catalysed reaction is acetaldehyde + NAD(+) + CoA = acetyl-CoA + NADH + H(+). The protein is Acetaldehyde dehydrogenase (pheF) of Geobacillus stearothermophilus (Bacillus stearothermophilus).